We begin with the raw amino-acid sequence, 365 residues long: Nicotinate N-methyltransferase 1 (365 aa).

D232 is a binding site for S-adenosyl-L-methionine.

The protein belongs to the class I-like SAM-binding methyltransferase superfamily. Cation-independent O-methyltransferase family.

The catalysed reaction is nicotinate + S-adenosyl-L-methionine = N-methylnicotinate + S-adenosyl-L-homocysteine. Functionally, involved in nicotinate detoxification in planta. Catalyzes the conversion of nicotinate to N-methylnicotinate, which is a detoxified form of endogenous nicotinate in planta. This chain is Nicotinate N-methyltransferase 1, found in Oryza sativa subsp. japonica (Rice).